Reading from the N-terminus, the 436-residue chain is MQVSVETTQGLERRLTITVPAESIDSQVKSRLQQLAKTQRINGFRPGKVPVSVIKKRYGQAVRQEIAGEAMQRNFYEAIVQEKITPAGMPNFEMKTDVDGQDLEFVAAFEVYPEVEVKDVEKIEVEKPVVEITDADLETMMETLRKQHATWKEVKRKSKKDDRVTVDFVGTIDGEEFEGGKAENFELEMGKDRMIPGFEKPIVGAKAGEEVVADVTFPEDYHAEALKGKEAQFKITVNKVEGLSLPKVDEEFAKLFGVEDGDVEALNAEVRKNMQRELEQTLKANVKEQVIEGLLANNEIDLPKALVDQEINALREQAKQRFSQQQGGNVDNLPELPADLFQENARKRVSIGLLLGEIIKTEELKVDSAKVDALIETAASAYEDPQEVIEYYKTNDELMQQMQNVALEEQAVEVLLSKANVKEVNKAFDEIMNKQA.

Residues 161–246 (DDRVTVDFVG…VNKVEGLSLP (86 aa)) form the PPIase FKBP-type domain.

The protein belongs to the FKBP-type PPIase family. Tig subfamily.

It is found in the cytoplasm. The enzyme catalyses [protein]-peptidylproline (omega=180) = [protein]-peptidylproline (omega=0). Involved in protein export. Acts as a chaperone by maintaining the newly synthesized protein in an open conformation. Functions as a peptidyl-prolyl cis-trans isomerase. The chain is Trigger factor from Pseudoalteromonas atlantica (strain T6c / ATCC BAA-1087).